The following is a 141-amino-acid chain: Putative antiporter subunit mnhB2 (141 aa).

The next 4 helical transmembrane spans lie at 10-30 (TVTK…FLAG), 35-55 (GGGF…FLAF), 70-90 (ILMI…MFFG), and 116-136 (VFEA…MLSI).

Belongs to the CPA3 antiporters (TC 2.A.63) subunit B family. As to quaternary structure, may form a heterooligomeric complex that consists of seven subunits: mnhA2, mnhB2, mnhC2, mnhD2, mnhE2, mnhF2 and mnhG2.

The protein resides in the cell membrane. This Staphylococcus saprophyticus subsp. saprophyticus (strain ATCC 15305 / DSM 20229 / NCIMB 8711 / NCTC 7292 / S-41) protein is Putative antiporter subunit mnhB2 (mnhB2).